A 272-amino-acid polypeptide reads, in one-letter code: Rhamnulose-1-phosphate aldolase (272 aa).

The active site involves E117. Residues H141, H143, and H212 each contribute to the Zn(2+) site.

It belongs to the aldolase class II family. RhaD subfamily. It depends on Zn(2+) as a cofactor.

The protein localises to the cytoplasm. The enzyme catalyses L-rhamnulose 1-phosphate = (S)-lactaldehyde + dihydroxyacetone phosphate. The protein operates within carbohydrate degradation; L-rhamnose degradation; glycerone phosphate from L-rhamnose: step 3/3. Its function is as follows. Catalyzes the reversible cleavage of L-rhamnulose-1-phosphate to dihydroxyacetone phosphate (DHAP) and L-lactaldehyde. This Mannheimia succiniciproducens (strain KCTC 0769BP / MBEL55E) protein is Rhamnulose-1-phosphate aldolase.